The following is a 132-amino-acid chain: Small ribosomal subunit protein uS17c (132 aa).

Positions 1 to 11 (MLLLSSPFVSV) are enriched in low complexity. 2 disordered regions span residues 1–23 (MLLLSSPFVSVSPPPPPLSSHGA) and 104–132 (PLPPRDTRRKSQLLPPLQSDDDQEPSSRE). The N-terminal 31 residues, 1 to 31 (MLLLSSPFVSVSPPPPPLSSHGARPALRIEA), are a transit peptide targeting the chloroplast. Acidic residues predominate over residues 122–132 (SDDDQEPSSRE).

Belongs to the universal ribosomal protein uS17 family. As to quaternary structure, part of the 30S ribosomal subunit.

It localises to the plastid. Its subcellular location is the chloroplast. One of the primary rRNA binding proteins, it binds specifically to the 5'-end of 16S ribosomal RNA. Functionally, in the hcf60 mutation the Activator tag is inserted 17 base pars upstream of the initiation codon. This mutation is seedling lethal, due to plastid ribosome insufficiency. However under non-light stressed conditions photosynthesis and oxygen evolution can occur. The protein is Small ribosomal subunit protein uS17c (RPS17) of Zea mays (Maize).